A 125-amino-acid polypeptide reads, in one-letter code: Holo-[acyl-carrier-protein] synthase (125 aa).

Positions 8 and 57 each coordinate Mg(2+).

It belongs to the P-Pant transferase superfamily. AcpS family. Mg(2+) serves as cofactor.

The protein localises to the cytoplasm. It carries out the reaction apo-[ACP] + CoA = holo-[ACP] + adenosine 3',5'-bisphosphate + H(+). Functionally, transfers the 4'-phosphopantetheine moiety from coenzyme A to a Ser of acyl-carrier-protein. This chain is Holo-[acyl-carrier-protein] synthase, found in Geobacter sp. (strain M21).